The sequence spans 206 residues: Superoxide dismutase [Mn] (206 aa).

The Mn(2+) site is built by H27, H82, D168, and H172.

This sequence belongs to the iron/manganese superoxide dismutase family. In terms of assembly, homodimer. It depends on Mn(2+) as a cofactor.

It catalyses the reaction 2 superoxide + 2 H(+) = H2O2 + O2. Functionally, destroys superoxide anion radicals which are normally produced within the cells and which are toxic to biological systems. The chain is Superoxide dismutase [Mn] (sodA) from Salmonella typhimurium (strain LT2 / SGSC1412 / ATCC 700720).